The sequence spans 418 residues: Gamma-glutamyl phosphate reductase (418 aa).

The protein belongs to the gamma-glutamyl phosphate reductase family.

The protein resides in the cytoplasm. The enzyme catalyses L-glutamate 5-semialdehyde + phosphate + NADP(+) = L-glutamyl 5-phosphate + NADPH + H(+). It functions in the pathway amino-acid biosynthesis; L-proline biosynthesis; L-glutamate 5-semialdehyde from L-glutamate: step 2/2. Catalyzes the NADPH-dependent reduction of L-glutamate 5-phosphate into L-glutamate 5-semialdehyde and phosphate. The product spontaneously undergoes cyclization to form 1-pyrroline-5-carboxylate. This is Gamma-glutamyl phosphate reductase from Lacticaseibacillus paracasei (strain ATCC 334 / BCRC 17002 / CCUG 31169 / CIP 107868 / KCTC 3260 / NRRL B-441) (Lactobacillus paracasei).